The primary structure comprises 180 residues: Large ribosomal subunit protein uL5 (180 aa).

It belongs to the universal ribosomal protein uL5 family. As to quaternary structure, part of the 50S ribosomal subunit; part of the 5S rRNA/L5/L18/L25 subcomplex. Contacts the 5S rRNA and the P site tRNA. Forms a bridge to the 30S subunit in the 70S ribosome.

This is one of the proteins that bind and probably mediate the attachment of the 5S RNA into the large ribosomal subunit, where it forms part of the central protuberance. In the 70S ribosome it contacts protein S13 of the 30S subunit (bridge B1b), connecting the 2 subunits; this bridge is implicated in subunit movement. Contacts the P site tRNA; the 5S rRNA and some of its associated proteins might help stabilize positioning of ribosome-bound tRNAs. This Lactobacillus acidophilus (strain ATCC 700396 / NCK56 / N2 / NCFM) protein is Large ribosomal subunit protein uL5.